A 284-amino-acid chain; its full sequence is Pantothenate synthetase (284 aa).

30–37 contacts ATP; that stretch reads MGNLHDGH. His-37 functions as the Proton donor in the catalytic mechanism. (R)-pantoate is bound at residue Gln-61. Gln-61 contributes to the beta-alanine binding site. 149-152 provides a ligand contact to ATP; it reads GEKD. A (R)-pantoate-binding site is contributed by Gln-155. ATP contacts are provided by residues Val-178 and 186–189; that span reads LSSR.

The protein belongs to the pantothenate synthetase family. As to quaternary structure, homodimer.

The protein localises to the cytoplasm. It carries out the reaction (R)-pantoate + beta-alanine + ATP = (R)-pantothenate + AMP + diphosphate + H(+). It participates in cofactor biosynthesis; (R)-pantothenate biosynthesis; (R)-pantothenate from (R)-pantoate and beta-alanine: step 1/1. Catalyzes the condensation of pantoate with beta-alanine in an ATP-dependent reaction via a pantoyl-adenylate intermediate. The sequence is that of Pantothenate synthetase from Cronobacter sakazakii (strain ATCC BAA-894) (Enterobacter sakazakii).